Reading from the N-terminus, the 206-residue chain is Large ribosomal subunit protein uL4 (206 aa).

Residues 44 to 87 (NRQGTQSAKTRSEVSGGGRKPWRQKGTGHARQGSTRSPQWTGGG) form a disordered region.

It belongs to the universal ribosomal protein uL4 family. As to quaternary structure, part of the 50S ribosomal subunit.

In terms of biological role, one of the primary rRNA binding proteins, this protein initially binds near the 5'-end of the 23S rRNA. It is important during the early stages of 50S assembly. It makes multiple contacts with different domains of the 23S rRNA in the assembled 50S subunit and ribosome. Functionally, forms part of the polypeptide exit tunnel. The sequence is that of Large ribosomal subunit protein uL4 from Lachnospira eligens (strain ATCC 27750 / DSM 3376 / VPI C15-48 / C15-B4) (Eubacterium eligens).